We begin with the raw amino-acid sequence, 136 residues long: Peptide methionine sulfoxide reductase MsrB (136 aa).

In terms of domain architecture, MsrB spans D9 to K136. Zn(2+) is bound by residues C53, C56, C102, and C105. C125 (nucleophile) is an active-site residue.

The protein belongs to the MsrB Met sulfoxide reductase family. It depends on Zn(2+) as a cofactor.

It carries out the reaction L-methionyl-[protein] + [thioredoxin]-disulfide + H2O = L-methionyl-(R)-S-oxide-[protein] + [thioredoxin]-dithiol. The protein is Peptide methionine sulfoxide reductase MsrB of Polaromonas sp. (strain JS666 / ATCC BAA-500).